The chain runs to 30 residues: Cysteine-rich venom protein mossambin (30 aa).

Residues 1-30 (NVDFNSESTRRKKKQNEIVDLHNSLRRTVN) form a disordered region.

The protein belongs to the CRISP family. Post-translationally, contains 8 disulfide bonds. Expressed by the venom gland.

It localises to the secreted. Inhibits calcium-activated potassium channels (KCa), voltage-gated potassium channel (Kv), and the calcium release channel/ryanodine receptor (RyR). The polypeptide is Cysteine-rich venom protein mossambin (Naja mossambica (Mozambique spitting cobra)).